The sequence spans 218 residues: Deoxyribose-phosphate aldolase (218 aa).

The active-site Proton donor/acceptor is Asp-92. Lys-156 functions as the Schiff-base intermediate with acetaldehyde in the catalytic mechanism. The active-site Proton donor/acceptor is Lys-185.

The protein belongs to the DeoC/FbaB aldolase family. DeoC type 1 subfamily.

It localises to the cytoplasm. It carries out the reaction 2-deoxy-D-ribose 5-phosphate = D-glyceraldehyde 3-phosphate + acetaldehyde. Its pathway is carbohydrate degradation; 2-deoxy-D-ribose 1-phosphate degradation; D-glyceraldehyde 3-phosphate and acetaldehyde from 2-deoxy-alpha-D-ribose 1-phosphate: step 2/2. Catalyzes a reversible aldol reaction between acetaldehyde and D-glyceraldehyde 3-phosphate to generate 2-deoxy-D-ribose 5-phosphate. The polypeptide is Deoxyribose-phosphate aldolase (Desulfitobacterium hafniense (strain DSM 10664 / DCB-2)).